A 560-amino-acid polypeptide reads, in one-letter code: Putative transport protein PBPRA2420 (560 aa).

Transmembrane regions (helical) follow at residues 5 to 25 (VASLLHQNDILLLFVVLAVGL), 37 to 57 (VGNSIGVLLTAILFGNAGFTF), 66 to 86 (FMLFIFCVGIEAGPNFFGIFF), 91 to 111 (HYLLLALVVLLSAIAITLAMT), and 161 to 181 (SLSVGYAMSYLMGLISLIFLA). RCK C-terminal domains follow at residues 203–292 (RGIG…FRNG) and 293–377 (KEVF…IGFI). 6 helical membrane passes run 386 to 406 (LLAFCCFFIIGLLIGSITLAF), 409 to 429 (VAFGLGSAAGLLIAGITLGFL), 452 to 472 (LMVFMVGIGLSAGSNLFDSFA), 477 to 497 (MVLVTSLMVSVIPVVLAYLFG), 506 to 526 (ALLFGAIIGARTCAPAMDMIN), and 539 to 559 (AGTYAIANVLLTIAGTLIIIM).

The protein belongs to the AAE transporter (TC 2.A.81) family. YbjL subfamily.

It is found in the cell membrane. The protein is Putative transport protein PBPRA2420 of Photobacterium profundum (strain SS9).